A 592-amino-acid chain; its full sequence is Medium-chain-fatty-acid--[acyl-carrier-protein] ligase JamA (592 aa).

This sequence belongs to the ATP-dependent AMP-binding enzyme family.

The enzyme catalyses a medium-chain fatty acid + holo-[ACP] + ATP = a medium-chain fatty acyl-[ACP] + AMP + diphosphate. It carries out the reaction a medium-chain fatty acid + ATP + H(+) = a medium-chain fatty acyl-AMP + diphosphate. The catalysed reaction is a medium-chain fatty acyl-AMP + holo-[ACP] = a medium-chain fatty acyl-[ACP] + AMP + H(+). Its function is as follows. Ligase involved in the biosynthesis of jamaicamides, which show sodium channel blocking activity and fish toxicity. Initiates jamaicamide biosynthesis by the activation of the starter unit, 5-hexenoic acid, followed by the loading of the activated 5-hexenoic acid onto the acyl carrier protein JamC. In vitro, can also use 5-hexynoic acid, heptanoic acid, butanoic acid, hexanoic acid and benzoic acid. This is Medium-chain-fatty-acid--[acyl-carrier-protein] ligase JamA from Moorena producens (strain JHB).